The sequence spans 872 residues: Translation initiation factor IF-2 (872 aa).

The segment covering 130–155 has biased composition (basic and acidic residues); the sequence is AEEEAARAAEEEAARLAEEEAARRAA. A disordered region spans residues 130–282; the sequence is AEEEAARAAE…RERERLKHMQ (153 aa). Low complexity predominate over residues 156–181; the sequence is EPQSEPEAAAPAAEPVAPTAPVAAAP. Residues 182–194 are compositionally biased toward pro residues; that stretch reads APAPATPVAPAQP. The segment covering 195–211 has biased composition (low complexity); the sequence is KPVAAAAPAGDATAVPR. Positions 271–282 are enriched in basic and acidic residues; the sequence is RARERERLKHMQ. Residues 371–539 form the tr-type G domain; it reads TRPPVVTVMG…AILLQAEILD (169 aa). Residues 380-387 are G1; it reads GHVDHGKT. 380–387 contributes to the GTP binding site; it reads GHVDHGKT. Positions 405–409 are G2; the sequence is GITQH. A G3 region spans residues 427-430; that stretch reads DTPG. Residues 427–431 and 481–484 each bind GTP; these read DTPGH and NKID. Residues 481 to 484 form a G4 region; that stretch reads NKID. Residues 517-519 are G5; sequence SAK.

The protein belongs to the TRAFAC class translation factor GTPase superfamily. Classic translation factor GTPase family. IF-2 subfamily.

The protein resides in the cytoplasm. Its function is as follows. One of the essential components for the initiation of protein synthesis. Protects formylmethionyl-tRNA from spontaneous hydrolysis and promotes its binding to the 30S ribosomal subunits. Also involved in the hydrolysis of GTP during the formation of the 70S ribosomal complex. The polypeptide is Translation initiation factor IF-2 (Paramagnetospirillum magneticum (strain ATCC 700264 / AMB-1) (Magnetospirillum magneticum)).